Reading from the N-terminus, the 177-residue chain is UPF0114 protein HPP12_0190 (177 aa).

A run of 4 helical transmembrane segments spans residues 15–35 (WLLA…GYAF), 54–74 (LVLS…VLMV), 102–122 (FNAL…IFLL), and 145–165 (PIFW…LAAV).

The protein belongs to the UPF0114 family.

The protein resides in the cell membrane. The sequence is that of UPF0114 protein HPP12_0190 from Helicobacter pylori (strain P12).